The sequence spans 101 residues: Urease subunit gamma (101 aa).

It belongs to the urease gamma subunit family. As to quaternary structure, heterotrimer of UreA (gamma), UreB (beta) and UreC (alpha) subunits. Three heterotrimers associate to form the active enzyme.

The protein resides in the cytoplasm. The catalysed reaction is urea + 2 H2O + H(+) = hydrogencarbonate + 2 NH4(+). It functions in the pathway nitrogen metabolism; urea degradation; CO(2) and NH(3) from urea (urease route): step 1/1. This is Urease subunit gamma from Ureaplasma urealyticum serovar 10 (strain ATCC 33699 / Western).